Reading from the N-terminus, the 377-residue chain is Probable aspartic-type endopeptidase CTSD (377 aa).

The 292-residue stretch at 1–292 (SLIDTGASRT…DFDKNRVGLA (292 aa)) folds into the Peptidase A1 domain. Aspartate 4 is an active-site residue. An N-linked (GlcNAc...) asparagine glycan is attached at asparagine 58. Aspartate 186 is a catalytic residue. The disordered stretch occupies residues 296–351 (YGETKDPPSSSHPPPAPTSNKASGGSPGLPEQSGTSSATTSTTGEPSSGSTASPSA). Residues 328-351 (SGTSSATTSTTGEPSSGSTASPSA) show a composition bias toward low complexity. Serine 350 carries GPI-anchor amidated serine lipidation. A propeptide spans 351–377 (AASSVSMSAWLSLAVFLSTASSLILWD) (removed in mature form).

The protein belongs to the peptidase A1 family.

The protein resides in the cell membrane. In terms of biological role, secreted aspartic-type endopeptidase which is secreted and contributes to virulence. In Arthroderma otae (strain ATCC MYA-4605 / CBS 113480) (Microsporum canis), this protein is Probable aspartic-type endopeptidase CTSD (CTSD).